The chain runs to 514 residues: Bifunctional lysine-specific demethylase and histidyl-hydroxylase NO66 (514 aa).

Residues M1–L53 are disordered. Acidic residues predominate over residues E7–V17. Residues G25 to K37 show a composition bias toward basic residues. Residues S44 to L53 are compositionally biased toward polar residues. The 148-residue stretch at C180 to E327 folds into the JmjC domain. Positions 226, 228, and 291 each coordinate Fe cation.

Belongs to the ROX family. NO66 subfamily. It depends on Fe(2+) as a cofactor.

Its subcellular location is the nucleus. The catalysed reaction is N(6),N(6)-dimethyl-L-lysyl(36)-[histone H3] + 2 2-oxoglutarate + 2 O2 = L-lysyl(36)-[histone H3] + 2 formaldehyde + 2 succinate + 2 CO2. In terms of biological role, oxygenase that can act as both a histone lysine demethylase and a ribosomal histidine hydroxylase. Specifically demethylates 'Lys-4' (H3K4me) and 'Lys-36' (H3K36me) of histone H3, thereby playing a central role in histone code. This chain is Bifunctional lysine-specific demethylase and histidyl-hydroxylase NO66 (jcdg), found in Dictyostelium discoideum (Social amoeba).